A 284-amino-acid polypeptide reads, in one-letter code: 4-diphosphocytidyl-2-C-methyl-D-erythritol kinase (284 aa).

Lys-9 is an active-site residue. Residue 90–100 participates in ATP binding; the sequence is PLVSGLGGDSS. Asp-132 is a catalytic residue.

This sequence belongs to the GHMP kinase family. IspE subfamily.

It carries out the reaction 4-CDP-2-C-methyl-D-erythritol + ATP = 4-CDP-2-C-methyl-D-erythritol 2-phosphate + ADP + H(+). Its pathway is isoprenoid biosynthesis; isopentenyl diphosphate biosynthesis via DXP pathway; isopentenyl diphosphate from 1-deoxy-D-xylulose 5-phosphate: step 3/6. Functionally, catalyzes the phosphorylation of the position 2 hydroxy group of 4-diphosphocytidyl-2C-methyl-D-erythritol. The sequence is that of 4-diphosphocytidyl-2-C-methyl-D-erythritol kinase from Dehalococcoides mccartyi (strain ATCC BAA-2266 / KCTC 15142 / 195) (Dehalococcoides ethenogenes (strain 195)).